The chain runs to 353 residues: Protein pelota homolog (353 aa).

It belongs to the eukaryotic release factor 1 family. Pelota subfamily. As to quaternary structure, monomer. It depends on a divalent metal cation as a cofactor.

It is found in the cytoplasm. Its function is as follows. May function in recognizing stalled ribosomes, interact with stem-loop structures in stalled mRNA molecules, and effect endonucleolytic cleavage of the mRNA. May play a role in the release non-functional ribosomes and degradation of damaged mRNAs. Has endoribonuclease activity. In Methanopyrus kandleri (strain AV19 / DSM 6324 / JCM 9639 / NBRC 100938), this protein is Protein pelota homolog.